We begin with the raw amino-acid sequence, 415 residues long: MATH domain and coiled-coil domain-containing protein At2g42465 (415 aa).

The 125-residue stretch at 6–130 (RKALTLTVTN…NDRFNIEIYI (125 aa)) folds into the MATH domain. Positions 244–341 (FKLEWLKAKL…LLKDTYSDLK (98 aa)) form a coiled coil.

This chain is MATH domain and coiled-coil domain-containing protein At2g42465, found in Arabidopsis thaliana (Mouse-ear cress).